Reading from the N-terminus, the 257-residue chain is Imidazole glycerol phosphate synthase subunit HisF (257 aa).

Active-site residues include D12 and D131.

It belongs to the HisA/HisF family. In terms of assembly, heterodimer of HisH and HisF.

It localises to the cytoplasm. The enzyme catalyses 5-[(5-phospho-1-deoxy-D-ribulos-1-ylimino)methylamino]-1-(5-phospho-beta-D-ribosyl)imidazole-4-carboxamide + L-glutamine = D-erythro-1-(imidazol-4-yl)glycerol 3-phosphate + 5-amino-1-(5-phospho-beta-D-ribosyl)imidazole-4-carboxamide + L-glutamate + H(+). It functions in the pathway amino-acid biosynthesis; L-histidine biosynthesis; L-histidine from 5-phospho-alpha-D-ribose 1-diphosphate: step 5/9. Its function is as follows. IGPS catalyzes the conversion of PRFAR and glutamine to IGP, AICAR and glutamate. The HisF subunit catalyzes the cyclization activity that produces IGP and AICAR from PRFAR using the ammonia provided by the HisH subunit. The polypeptide is Imidazole glycerol phosphate synthase subunit HisF (Burkholderia ambifaria (strain MC40-6)).